The primary structure comprises 235 residues: Riboflavin kinase (235 aa).

The Mg(2+) site is built by threonine 45 and asparagine 47. Glutamate 140 serves as the catalytic Nucleophile.

Belongs to the flavokinase family. Requires Zn(2+) as cofactor. The cofactor is Mg(2+).

It catalyses the reaction riboflavin + ATP = FMN + ADP + H(+). Its pathway is cofactor biosynthesis; FMN biosynthesis; FMN from riboflavin (ATP route): step 1/1. In terms of biological role, catalyzes the phosphorylation of riboflavin (vitamin B2) to form flavin mononucleotide (FMN) coenzyme. This is Riboflavin kinase (FMN1) from Chaetomium globosum (strain ATCC 6205 / CBS 148.51 / DSM 1962 / NBRC 6347 / NRRL 1970) (Soil fungus).